The chain runs to 529 residues: Heat shock protein 60 (529 aa).

The segment at 460 to 484 (YQATVQHPPPQSSYEEDGRRPPTQP) is disordered.

The chain is Heat shock protein 60 from Giardia intestinalis (Giardia lamblia).